The following is a 470-amino-acid chain: 4-O-methyltransferase 1 (470 aa).

S-adenosyl-L-methionine is bound by residues 274 to 275 (GG), D297, 328 to 329 (DC), and K344. The active-site Proton acceptor is H348.

It belongs to the class I-like SAM-binding methyltransferase superfamily. Cation-independent O-methyltransferase family. COMT subfamily.

S-adenosyl-L-methionine-dependent methyltransferase that preferentially catalyzes the methylation of 4-OH phenolic compounds like coniferyl alcohol, vanillyl alcohol and ferrulic acid. May play a role in promoting lignin degradation by methylating and inactivating free-hydroxyl phenolic compounds, products of lignin cleavage which are known inhibitors of lignin peroxidases. The polypeptide is 4-O-methyltransferase 1 (Phanerochaete chrysosporium (strain RP-78 / ATCC MYA-4764 / FGSC 9002) (White-rot fungus)).